The chain runs to 189 residues: MSTAPSPTITSPTQTSPVVINKSLICQDSTVSNGVQIAIGTVLHPRSSIIISEGAGPIIIGENNIIEELVQIVNKSPEPMIIGSNNLFEVGSYIECKSIGNGNVFEPKCKILKNTIIKDQCSIGAGCIVSEDKICENNTIIAQTQNSQIQTTSTLPYDHHSSIHMTHLELLHKSIPLFHTIKKTPILEK.

It belongs to the dynactin subunits 5/6 family. Dynactin subunit 6 subfamily. Subunit of dynactin, a multiprotein complex part of a tripartite complex with dynein and a adapter, such as BICDL1, BICD2 or HOOK3. The dynactin complex is built around ACTR1A/ACTB filament and consists of an actin-related filament composed of a shoulder domain, a pointed end and a barbed end.

It localises to the cytoplasm. The protein localises to the cytoskeleton. Its function is as follows. Part of the dynactin complex that activates the molecular motor dynein for ultra-processive transport along microtubules. This Dictyostelium discoideum (Social amoeba) protein is Dynactin subunit 6 (dynF).